A 354-amino-acid polypeptide reads, in one-letter code: 3-isopropylmalate dehydrogenase (354 aa).

An NAD(+)-binding site is contributed by Gly-76 to Glu-87. Substrate contacts are provided by Arg-94, Arg-104, Arg-130, and Asp-215. Mg(2+)-binding residues include Asp-215, Asp-239, and Asp-243. Position 273 to 285 (Gly-273 to Asn-285) interacts with NAD(+).

This sequence belongs to the isocitrate and isopropylmalate dehydrogenases family. LeuB type 1 subfamily. As to quaternary structure, homodimer. It depends on Mg(2+) as a cofactor. Mn(2+) is required as a cofactor.

Its subcellular location is the cytoplasm. The enzyme catalyses (2R,3S)-3-isopropylmalate + NAD(+) = 4-methyl-2-oxopentanoate + CO2 + NADH. Its pathway is amino-acid biosynthesis; L-leucine biosynthesis; L-leucine from 3-methyl-2-oxobutanoate: step 3/4. Its function is as follows. Catalyzes the oxidation of 3-carboxy-2-hydroxy-4-methylpentanoate (3-isopropylmalate) to 3-carboxy-4-methyl-2-oxopentanoate. The product decarboxylates to 4-methyl-2 oxopentanoate. This Bacillus cereus (strain ATCC 14579 / DSM 31 / CCUG 7414 / JCM 2152 / NBRC 15305 / NCIMB 9373 / NCTC 2599 / NRRL B-3711) protein is 3-isopropylmalate dehydrogenase.